A 302-amino-acid chain; its full sequence is MTDYNLTHLKQLEAESIHIIREVAAEFERPVMLYSIGKDSSVMLHLARKAFFPGKPPFPLMHVDTTWKFQDMITFRDQQAAKFGLDLIVHINEDGVRQGIGPFTHGSAKHTDVMKTESLKQALNKYKFDAAFGGARRDEEKSRAKERVYSFRDSNHRWDPKNQRPELWNLYNGKINKGESIRVFPLSNWTELDIWQYIYLENIELVPLYFSAKRPVVERDGTMIMVDDDRMPLKPGETPMMKDVRFRTLGCYPLTGAIESTATTLPEIIQEMLLTTSSERQGRVIDHDQAGSMEQKKREGYF.

Positions 280–302 are disordered; sequence RQGRVIDHDQAGSMEQKKREGYF.

The protein belongs to the PAPS reductase family. CysD subfamily. In terms of assembly, heterodimer composed of CysD, the smaller subunit, and CysN.

It catalyses the reaction sulfate + ATP + H(+) = adenosine 5'-phosphosulfate + diphosphate. It functions in the pathway sulfur metabolism; hydrogen sulfide biosynthesis; sulfite from sulfate: step 1/3. Functionally, with CysN forms the ATP sulfurylase (ATPS) that catalyzes the adenylation of sulfate producing adenosine 5'-phosphosulfate (APS) and diphosphate, the first enzymatic step in sulfur assimilation pathway. APS synthesis involves the formation of a high-energy phosphoric-sulfuric acid anhydride bond driven by GTP hydrolysis by CysN coupled to ATP hydrolysis by CysD. The chain is Sulfate adenylyltransferase subunit 2 from Hahella chejuensis (strain KCTC 2396).